The following is a 1042-amino-acid chain: Sarcoplasmic/endoplasmic reticulum calcium ATPase 2 (1042 aa).

Residues 1–48 (MENAHTKTVEEVLGHFGVNESTGLSLEQVKKLKERWGSNELPAEEGKT) are Cytoplasmic-facing. S38 carries the phosphoserine modification. Residues 49 to 69 (LLELVIEQFEDLLVRILLLAA) form a helical membrane-spanning segment. The Lumenal segment spans residues 70–89 (CISFVLAWFEEGEETITAFV). A helical transmembrane segment spans residues 90-110 (EPFVILLILVANAIVGVWQER). At 111-253 (NAENAIEALK…QERTPLQQKL (143 aa)) the chain is on the cytoplasmic side. A helical transmembrane segment spans residues 254 to 273 (DEFGEQLSKVISLICIAVWI). The Lumenal segment spans residues 274 to 295 (INIGHFNDPVHGGSWIRGAIYY). A 3'-nitrotyrosine mark is found at Y294 and Y295. Residues 296–313 (FKIAVALAVAAIPEGLPA) traverse the membrane as a helical segment. Residues V304, A305, I307, and E309 each coordinate Ca(2+). The Cytoplasmic portion of the chain corresponds to 314 to 756 (VITTCLALGT…EEGRAIYNNM (443 aa)). The active-site 4-aspartylphosphate intermediate is D351. The Mg(2+) site is built by D351 and T353. T353 is a binding site for ATP. A Phosphothreonine modification is found at T441. ATP contacts are provided by E442, R489, and K514. S531 bears the Phosphoserine mark. R559 is a binding site for ATP. Positions 575–594 (MNLEDSANFIKYETNLTFVG) are interaction with HAX1. A Phosphoserine modification is found at S580. ATP-binding residues include T624, G625, and D626. S663 bears the Phosphoserine mark. The ATP site is built by R677 and K683. Position 702 (D702) interacts with Mg(2+). An ATP-binding site is contributed by N705. A helical membrane pass occupies residues 757–776 (KQFIRYLISSNVGEVVCIFL). Positions 767 and 770 each coordinate Ca(2+). Residues 777 to 786 (TAALGFPEAL) are Lumenal-facing. A helical transmembrane segment spans residues 787-807 (IPVQLLWVNLVTDGLPATALG). The interval 787-807 (IPVQLLWVNLVTDGLPATALG) is interaction with PLN. The interaction with TMEM64 and PDIA3 stretch occupies residues 788-1042 (PVQLLWVNLV…DTNFSDMFWS (255 aa)). Ca(2+)-binding residues include N795, T798, and D799. Residues 808 to 827 (FNPPDLDIMNKPPRNPKEPL) lie on the Cytoplasmic side of the membrane. The helical transmembrane segment at 828 to 850 (ISGWLFFRYLAIGCYVGAATVGA) threads the bilayer. Topologically, residues 851 to 896 (AAWWFIAADGGPRVTFYQLSHFLQCKEDNPDFEGVDCAVFESPYPM) are lumenal. An intrachain disulfide couples C875 to C887. Residues 897–916 (TMALSVLVTIEMCNALNSLS) form a helical membrane-spanning segment. Position 907 (E907) interacts with Ca(2+). Residues 917–929 (ENQSLLRMPPWEN) lie on the Cytoplasmic side of the membrane. A helical transmembrane segment spans residues 930–948 (IWLVGSICLSMSLHFLILY). Residues 931–942 (WLVGSICLSMSL) are interaction with PLN. Residues 949-963 (VEPLPLIFQITPLNL) lie on the Lumenal side of the membrane. A helical membrane pass occupies residues 964-984 (TQWLMVLKISLPVILMDETLK). The Cytoplasmic portion of the chain corresponds to 985–1042 (FVARNYLEPGKECVQPATKSCSFSACTDGISWPFVLLIMPLVIWVYSTDTNFSDMFWS).

The protein belongs to the cation transport ATPase (P-type) (TC 3.A.3) family. Type IIA subfamily. As to quaternary structure, interacts with sarcolipin (SLN); the interaction inhibits ATP2A2 Ca(2+) affinity. Interacts with phospholamban (PLN); the interaction inhibits ATP2A2 Ca(2+) affinity. Interacts with myoregulin (MRLN). Interacts with ARLN and ERLN; the interactions inhibit ATP2A2 Ca(2+) affinity. Interacts with STRIT1/DWORF; the interaction results in activation of ATP2A2. Interacts with the monomeric forms of SLN, PLN, ARLN, ERLN and STRI1/DWORF. Interacts with HAX1. Interacts with S100A8 and S100A9. Interacts with SLC35G1 and STIM1. Interacts with TMEM203. Interacts with TMEM64 and PDIA3. Interacts with TMX1. Interacts with TMX2. Interacts with VMP1; VMP1 competes with PLN and SLN to prevent them from forming an inhibitory complex with ATP2A2. Interacts with ULK1. Interacts with S100A1 in a Ca(2+)-dependent manner. Interacts with TUNAR. Interacts with FLVCR2; this interaction occurs in the absence of heme and promotes ATP2A2 proteasomal degradation; this complex is dissociated upon heme binding. Interacts with FNIP1. In terms of assembly, interacts with TRAM2 (via C-terminus). Mg(2+) serves as cofactor. Nitrated under oxidative stress. Nitration on the two tyrosine residues inhibits catalytic activity. Post-translationally, serotonylated on Gln residues by TGM2 in response to hypoxia, leading to its inactivation. As to expression, detected in heart left ventricle (at protein level). Isoform 2 is highly expressed in heart and slow twitch skeletal muscle. Isoform 1 is widely expressed.

The protein resides in the endoplasmic reticulum membrane. It localises to the sarcoplasmic reticulum membrane. It catalyses the reaction Ca(2+)(in) + ATP + H2O = Ca(2+)(out) + ADP + phosphate + H(+). Its activity is regulated as follows. Has different conformational states with differential Ca2+ affinity. The E1 conformational state (active form) shows high Ca(2+) affinity, while the E2 state exhibits low Ca(2+) affinity. Binding of ATP allosterically increases its affinity for subsequent binding of Ca2+. Reversibly inhibited by phospholamban (PLN) at low calcium concentrations. PLN inhibits ATP2A2 Ca(2+) affinity by disrupting its allosteric activation by ATP. Inhibited by sarcolipin (SLN) and myoregulin (MRLN). The inhibition is blocked by VMP1. Enhanced by STRIT1/DWORF; STRIT1 increases activity by displacing sarcolipin (SLN), phospholamban (PLN) and myoregulin (MRLN). Stabilizes SERCA2 in its E2 state. Functionally, this magnesium-dependent enzyme catalyzes the hydrolysis of ATP coupled with the translocation of calcium from the cytosol to the sarcoplasmic reticulum lumen. Involved in autophagy in response to starvation. Upon interaction with VMP1 and activation, controls ER-isolation membrane contacts for autophagosome formation. Also modulates ER contacts with lipid droplets, mitochondria and endosomes. In coordination with FLVCR2 mediates heme-stimulated switching from mitochondrial ATP synthesis to thermogenesis. Involved in the regulation of the contraction/relaxation cycle. Acts as a regulator of TNFSF11-mediated Ca(2+) signaling pathways via its interaction with TMEM64 which is critical for the TNFSF11-induced CREB1 activation and mitochondrial ROS generation necessary for proper osteoclast generation. Association between TMEM64 and SERCA2 in the ER leads to cytosolic Ca(2+) spiking for activation of NFATC1 and production of mitochondrial ROS, thereby triggering Ca(2+) signaling cascades that promote osteoclast differentiation and activation. The chain is Sarcoplasmic/endoplasmic reticulum calcium ATPase 2 (ATP2A2) from Sus scrofa (Pig).